Reading from the N-terminus, the 462-residue chain is Gamma-aminobutyric acid receptor subunit alpha-5 (462 aa).

The first 31 residues, 1–31, serve as a signal peptide directing secretion; sequence MDNGMFSGFIMIKNLLLFCISMNLSSHFGFS. Topologically, residues 32-260 are extracellular; the sequence is QMPTSSVKDE…FHLKRKIGYF (229 aa). Asparagine 45 carries an N-linked (GlcNAc...) asparagine glycan. Arginine 101 lines the 4-aminobutanoate pocket. Asparagine 145 carries N-linked (GlcNAc...) asparagine glycosylation. Threonine 164 lines the 4-aminobutanoate pocket. A disulfide bond links cysteine 173 and cysteine 187. N-linked (GlcNAc...) asparagine glycans are attached at residues asparagine 207 and asparagine 236. A helical transmembrane segment spans residues 261 to 281; sequence VIQTYLPCIMTVILSQVSFWL. Residues 282-286 lie on the Cytoplasmic side of the membrane; that stretch reads NRESV. A helical membrane pass occupies residues 287–308; sequence PARTVFGVTTVLTMTTLSISAR. The Extracellular segment spans residues 309–318; it reads NSLPKVAYAT. A helical transmembrane segment spans residues 319 to 340; it reads AMDWFIAVCYAFVFSALIEFAT. The Cytoplasmic portion of the chain corresponds to 341–427; sequence VNYFTKRGWA…TYNSISKIDK (87 aa). Lysine 355 participates in a covalent cross-link: Glycyl lysine isopeptide (Lys-Gly) (interchain with G-Cter in ubiquitin). The segment at 377 to 412 is disordered; sequence FTTGKMSHPPNIPKEQTPAGTSNTTSVSVKPSEEKT. A helical transmembrane segment spans residues 428–448; it reads MSRIVFPVLFGTFNLVYWATY. The Extracellular portion of the chain corresponds to 449 to 462; it reads LNREPVIKGAASPK.

The protein belongs to the ligand-gated ion channel (TC 1.A.9) family. Gamma-aminobutyric acid receptor (TC 1.A.9.5) subfamily. GABRA5 sub-subfamily. Heteropentamer, formed by a combination of alpha (GABRA1-6), beta (GABRB1-3), gamma (GABRG1-3), delta (GABRD), epsilon (GABRE), rho (GABRR1-3), pi (GABRP) and theta (GABRQ) chains, each subunit exhibiting distinct physiological and pharmacological properties.

It is found in the postsynaptic cell membrane. The protein resides in the cell membrane. It catalyses the reaction chloride(in) = chloride(out). Alpha subunit of the heteropentameric ligand-gated chloride channel gated by gamma-aminobutyric acid (GABA), a major inhibitory neurotransmitter in the brain. GABA-gated chloride channels, also named GABA(A) receptors (GABAAR), consist of five subunits arranged around a central pore and contain GABA active binding site(s) located at the alpha and beta subunit interface(s). When activated by GABA, GABAARs selectively allow the flow of chloride anions across the cell membrane down their electrochemical gradient. GABAARs containing alpha-5/GABRA5 subunits are mainly extrasynaptic and contribute to the tonic GABAergic inhibition in the hippocampus. Extrasynaptic alpha-5-containing GABAARs in CA1 pyramidal neurons play a role in learning and memory processes. This chain is Gamma-aminobutyric acid receptor subunit alpha-5, found in Homo sapiens (Human).